A 206-amino-acid polypeptide reads, in one-letter code: MKLLLASNNAKKLKELQRILDQAGLDSVELLALRDVEAYDEPIEDGRTFADNAQIKARAGVAHTGIATIADDSGIAVEELNGMPGVLSARWSGAHGNDTANNELLLAQMEHVPDERRNAAFVSVCVLALPDGQEFVQEGRWEGQLLRGPKGENGFGYDPLFIPAEEIGGQGRSSAELSAEEKDALSHRGQALRGLVEKIAQVAAAS.

A substrate-binding site is contributed by 7–12 (SNNAKK). Residue D72 is the Proton acceptor of the active site. Residue D72 participates in Mg(2+) binding. Substrate-binding positions include S73, 155–158 (FGYD), K182, and 187–188 (HR).

This sequence belongs to the HAM1 NTPase family. Homodimer. The cofactor is Mg(2+).

The catalysed reaction is XTP + H2O = XMP + diphosphate + H(+). The enzyme catalyses dITP + H2O = dIMP + diphosphate + H(+). It carries out the reaction ITP + H2O = IMP + diphosphate + H(+). Functionally, pyrophosphatase that catalyzes the hydrolysis of nucleoside triphosphates to their monophosphate derivatives, with a high preference for the non-canonical purine nucleotides XTP (xanthosine triphosphate), dITP (deoxyinosine triphosphate) and ITP. Seems to function as a house-cleaning enzyme that removes non-canonical purine nucleotides from the nucleotide pool, thus preventing their incorporation into DNA/RNA and avoiding chromosomal lesions. This Corynebacterium glutamicum (strain R) protein is dITP/XTP pyrophosphatase.